The sequence spans 374 residues: TTIILLIAFAAIQLSKADDLKFVFVMARGGDFVAGDYAGGPKIINKEAKDSELTEQGKQEAFQLGTKLSELYKTKLGVSKWDSKTTYWPVALSQKRTQVSTLITGAGLEGDQSKRNKAWTNEELKATSFPAMESFSRFIKPNECPKYLEELMKQKQEISTILKECSSSVQQVKSKYSAVNVNLPQHIWLAYETLKKLKRQQPSSSTWMTDDLMKNLRECSAKITWLATTKTDTLRKLSGGLLLNDLFNDMDQITQGKAQPNAPGGKDSKLNVFTVSQFLVISQLAAFMPEGSKLNNKAVTASDIYPEDGSHVDIEMYQENNKWSVKLVYVSGKDKQPQTITLPGCQEKCPYEQFKSALQKYKITDEEHQKACKN.

An N-terminal signal peptide occupies residues threonine 1–alanine 17. Serotonin is bound at residue valine 25. 3 cysteine pairs are disulfide-bonded: cysteine 144-cysteine 372, cysteine 165-cysteine 219, and cysteine 345-cysteine 349. Serotonin is bound by residues aspartate 245, aspartate 249, asparagine 271, and glutamine 283.

The protein belongs to the histidine acid phosphatase family.

The protein resides in the secreted. Probably modulates blood feeding of fleas on vertebrate species by binding and sequestering different mediators involved in the host response. Binds biogenic amines: serotonin, adrenaline and noradrenaline. Binds leukotriene C4. Does not bind histamine, leukotriene B4, leukotriene D4, leukotriene E4, ADP, and stable analogs of thromboxane A2: U-46619 and cTXA2. The sequence is that of Acid phosphatase-like protein XcAP-1 from Xenopsylla cheopis (Oriental rat flea).